Here is a 44-residue protein sequence, read N- to C-terminus: Thymosin beta (44 aa).

The tract at residues 1-44 is disordered; that stretch reads MSDKHDKPDISEVTKFDKSKLKKTETHEKNPLPTKETIDQEKQG. The residue at position 2 (Ser-2) is an N-acetylserine.

Expressed in regenerating axons.

Its subcellular location is the cytoplasm. The protein localises to the cytoskeleton. Its function is as follows. Plays an important role in the organization of the cytoskeleton. Binds to and sequesters actin monomers (G actin) and therefore inhibits actin polymerization. May be involved in the regulation of structural plasticity in the CNS. The protein is Thymosin beta of Aplysia californica (California sea hare).